Here is a 242-residue protein sequence, read N- to C-terminus: DnaJ homolog subfamily B member 6 (242 aa).

In terms of domain architecture, J spans 3 to 69 (EYYDVLGVQR…KKRDIYDKYG (67 aa)).

In terms of assembly, homooligomer.

It localises to the cytoplasm. The protein resides in the perinuclear region. It is found in the nucleus. Its function is as follows. Has a stimulatory effect on the ATPase activity of HSP70 in a dose-dependent and time-dependent manner and hence acts as a co-chaperone of HSP70. Plays an indispensable role in the organization of KRT8/KRT18 filaments. Acts as an endogenous molecular chaperone for neuronal proteins including huntingtin. Suppresses aggregation and toxicity of polyglutamine-containing, aggregation-prone proteins. Also reduces cellular toxicity and caspase-3 activity. The polypeptide is DnaJ homolog subfamily B member 6 (Xenopus tropicalis (Western clawed frog)).